The following is a 177-amino-acid chain: Putative HTH-type transcriptional regulator YvaV (177 aa).

A DNA-binding region (H-T-H motif) is located at residues 49–73 (LTELSEATGMSKTRMSQVVREMLDA).

It belongs to the GbsR family.

This is Putative HTH-type transcriptional regulator YvaV (yvaV) from Bacillus subtilis (strain 168).